A 132-amino-acid polypeptide reads, in one-letter code: Small ribosomal subunit protein uS8 (132 aa).

Belongs to the universal ribosomal protein uS8 family. Part of the 30S ribosomal subunit. Contacts proteins S5 and S12.

Functionally, one of the primary rRNA binding proteins, it binds directly to 16S rRNA central domain where it helps coordinate assembly of the platform of the 30S subunit. This Clostridium acetobutylicum (strain ATCC 824 / DSM 792 / JCM 1419 / IAM 19013 / LMG 5710 / NBRC 13948 / NRRL B-527 / VKM B-1787 / 2291 / W) protein is Small ribosomal subunit protein uS8.